The primary structure comprises 249 residues: NAD(P)H-quinone oxidoreductase subunit K 2 (249 aa).

4 residues coordinate [4Fe-4S] cluster: Cys54, Cys55, Cys119, and Cys150.

It belongs to the complex I 20 kDa subunit family. As to quaternary structure, NDH-1 can be composed of about 15 different subunits; different subcomplexes with different compositions have been identified which probably have different functions. [4Fe-4S] cluster serves as cofactor.

The protein resides in the cell inner membrane. It carries out the reaction a plastoquinone + NADH + (n+1) H(+)(in) = a plastoquinol + NAD(+) + n H(+)(out). It catalyses the reaction a plastoquinone + NADPH + (n+1) H(+)(in) = a plastoquinol + NADP(+) + n H(+)(out). Its function is as follows. NDH-1 shuttles electrons from an unknown electron donor, via FMN and iron-sulfur (Fe-S) centers, to quinones in the respiratory and/or the photosynthetic chain. The immediate electron acceptor for the enzyme in this species is believed to be plastoquinone. Couples the redox reaction to proton translocation, and thus conserves the redox energy in a proton gradient. Cyanobacterial NDH-1 also plays a role in inorganic carbon-concentration. In Gloeobacter violaceus (strain ATCC 29082 / PCC 7421), this protein is NAD(P)H-quinone oxidoreductase subunit K 2.